The primary structure comprises 267 residues: Putative B3 domain-containing protein LOC_Os07g12820 (267 aa).

Positions 4 to 99 (PTFSMVKIKT…RLNVIIFNKE (96 aa)) form a DNA-binding region, TF-B3.

The protein resides in the nucleus. This is Putative B3 domain-containing protein LOC_Os07g12820 from Oryza sativa subsp. japonica (Rice).